Reading from the N-terminus, the 123-residue chain is MPTINQLIRKPRAPLVARDKVPALQECPQKRGVCTRVYTTTPKKPNSALRKVARVRLTNGYEVISYIPGEGHNLQEHSVVMIRGGRVKDLPGVRYHIIRGVLDTQGVKDRRQRRSLYGAKRPK.

Residue Asp-89 is modified to 3-methylthioaspartic acid.

This sequence belongs to the universal ribosomal protein uS12 family. As to quaternary structure, part of the 30S ribosomal subunit. Contacts proteins S8 and S17. May interact with IF1 in the 30S initiation complex.

Functionally, with S4 and S5 plays an important role in translational accuracy. Its function is as follows. Interacts with and stabilizes bases of the 16S rRNA that are involved in tRNA selection in the A site and with the mRNA backbone. Located at the interface of the 30S and 50S subunits, it traverses the body of the 30S subunit contacting proteins on the other side and probably holding the rRNA structure together. The combined cluster of proteins S8, S12 and S17 appears to hold together the shoulder and platform of the 30S subunit. This chain is Small ribosomal subunit protein uS12, found in Rhodospirillum centenum (strain ATCC 51521 / SW).